Consider the following 111-residue polypeptide: Small ribosomal subunit protein uS10 (111 aa).

It belongs to the universal ribosomal protein uS10 family. As to quaternary structure, part of the 30S ribosomal subunit.

Involved in the binding of tRNA to the ribosomes. This Ehrlichia ruminantium (strain Welgevonden) protein is Small ribosomal subunit protein uS10.